The sequence spans 238 residues: Testis-specific gene A8 protein (238 aa).

Residues 35–238 are disordered; the sequence is GKGAKTNKRG…GEAVATTTMT (204 aa). Over residues 39 to 48 the composition is skewed to basic residues; it reads KTNKRGKRGG. 8 repeat units span residues 79–93, 94–108, 109–123, 124–138, 153–158, 171–176, 180–185, and 189–194. The tract at residues 79–148 is 4 X 15 AA tandem repeats of A-A-A-A-A-P-E-A-A-A-S-[PL]-E-S-S; the sequence is AAAAAPEAAA…AAAAAPEAAA (70 aa). 2 stretches are compositionally biased toward low complexity: residues 79–200 and 208–220; these read AAAA…AAPA and WEAA…AAVK. The segment at 153-194 is 4 X 6 AA repeats of P-A-A-P-E-A; the sequence is PAAPEAAAAPEVAAAPATPAAPEATAAPAAPEAATTPAAPEA.

In terms of tissue distribution, specifically expressed in testis (at protein level).

The protein localises to the cytoplasm. It is found in the nucleus. It localises to the nucleoplasm. This is Testis-specific gene A8 protein from Mus musculus (Mouse).